A 151-amino-acid polypeptide reads, in one-letter code: KESAAAKFRRQHMDAGSSSSGNSNYCNQMMKRRRMTHGRCKPVNTFVHESLDSVKAVCSQKNITCKNGQPNCYQSNSTMNITDCRETGSSKYPNCAYKTSQKQKYITVACEGNPYVPVHFDGSVFLPATPLPSLPAPHKHRLLWLEGNNSS.

The disordered stretch occupies residues K1–Y25. Residues K7 and R10 each coordinate substrate. Residue H12 is the Proton acceptor of the active site. 4 cysteine pairs are disulfide-bonded: C26-C84, C40-C95, C58-C110, and C65-C72. K41 to T45 is a substrate binding site. An N-linked (GlcNAc...) asparagine glycan is attached at N62. Positions 66 and 85 each coordinate substrate. The active-site Proton donor is the H119. An O-linked (GalNAc...) threonine glycan is attached at T129. A glycan (O-linked (GalNAc...) serine) is linked at S133.

The protein belongs to the pancreatic ribonuclease family.

It is found in the secreted. In Axis porcinus (Hog deer), this protein is Brain ribonuclease (BRN).